The sequence spans 66 residues: Prokaryotic ubiquitin-like protein UBact (66 aa).

The tract at residues methionine 1 to glutamate 66 is disordered. The segment covering glycine 30–glutamate 66 has biased composition (basic and acidic residues). Glutamate 66 participates in a covalent cross-link: Isoglutamyl lysine isopeptide (Glu-Lys) (interchain with K-? in acceptor proteins).

This sequence belongs to the ubiquitin-like protein UBact family.

Functionally, may function as a protein modifier covalently attached to lysine residues of substrate proteins. This may serve to target the modified proteins for degradation by proteasomes. This Nitrospira moscoviensis protein is Prokaryotic ubiquitin-like protein UBact.